The chain runs to 129 residues: Translation initiation factor 5A (129 aa).

Hypusine is present on Lys36.

It belongs to the eIF-5A family.

It localises to the cytoplasm. Functions by promoting the formation of the first peptide bond. The protein is Translation initiation factor 5A (eif5a) of Thermoplasma acidophilum (strain ATCC 25905 / DSM 1728 / JCM 9062 / NBRC 15155 / AMRC-C165).